A 266-amino-acid polypeptide reads, in one-letter code: ATP synthase subunit a (266 aa).

5 helical membrane passes run 28–48 (SINV…LVIF), 88–108 (LIAP…LMDL), 141–161 (DVNI…FYSI), 206–226 (LFGN…LLPW), and 237–257 (AIFH…LTVV).

The protein belongs to the ATPase A chain family. F-type ATPases have 2 components, CF(1) - the catalytic core - and CF(0) - the membrane proton channel. CF(1) has five subunits: alpha(3), beta(3), gamma(1), delta(1), epsilon(1). CF(0) has three main subunits: a(1), b(2) and c(9-12). The alpha and beta chains form an alternating ring which encloses part of the gamma chain. CF(1) is attached to CF(0) by a central stalk formed by the gamma and epsilon chains, while a peripheral stalk is formed by the delta and b chains.

It localises to the cell inner membrane. In terms of biological role, key component of the proton channel; it plays a direct role in the translocation of protons across the membrane. This is ATP synthase subunit a from Pectobacterium carotovorum subsp. carotovorum (strain PC1).